Consider the following 88-residue polypeptide: Small ribosomal subunit protein uS15c (88 aa).

The protein belongs to the universal ribosomal protein uS15 family. As to quaternary structure, part of the 30S ribosomal subunit.

The protein resides in the plastid. It localises to the chloroplast. This Cycas taitungensis (Prince sago) protein is Small ribosomal subunit protein uS15c (rps15).